Consider the following 152-residue polypeptide: Transcriptional regulator MraZ (152 aa).

2 SpoVT-AbrB domains span residues 5–52 (ASAI…PIHE) and 81–124 (AHEC…DEAA).

The protein belongs to the MraZ family. Forms oligomers.

It localises to the cytoplasm. The protein localises to the nucleoid. This Shewanella pealeana (strain ATCC 700345 / ANG-SQ1) protein is Transcriptional regulator MraZ.